The following is a 553-amino-acid chain: Arginine--tRNA ligase (553 aa).

The 'HIGH' region signature appears at 122 to 132; sequence ANPTGFLHVGH.

The protein belongs to the class-I aminoacyl-tRNA synthetase family. In terms of assembly, monomer.

Its subcellular location is the cytoplasm. It catalyses the reaction tRNA(Arg) + L-arginine + ATP = L-arginyl-tRNA(Arg) + AMP + diphosphate. This is Arginine--tRNA ligase from Mesoplasma florum (strain ATCC 33453 / NBRC 100688 / NCTC 11704 / L1) (Acholeplasma florum).